A 511-amino-acid polypeptide reads, in one-letter code: Ribonuclease Y (511 aa).

Residues V3–I23 form a helical membrane-spanning segment. Residues T201–V286 form the KH domain. The HD domain occupies V327–A420.

It belongs to the RNase Y family.

It is found in the cell membrane. In terms of biological role, endoribonuclease that initiates mRNA decay. In Clostridium perfringens (strain ATCC 13124 / DSM 756 / JCM 1290 / NCIMB 6125 / NCTC 8237 / Type A), this protein is Ribonuclease Y.